Here is a 321-residue protein sequence, read N- to C-terminus: Endochitinase 33 (321 aa).

The signal sequence occupies residues 1–19; that stretch reads MPSLTALASLLALVPSALA. Positions 27–321 constitute a GH18 domain; it reads QNIAVYWGQN…FETQVVNALR (295 aa). E167 serves as the catalytic Proton donor.

It belongs to the glycosyl hydrolase 18 family. Chitinase class III subfamily. As to quaternary structure, monomer.

Its subcellular location is the secreted. The enzyme catalyses Random endo-hydrolysis of N-acetyl-beta-D-glucosaminide (1-&gt;4)-beta-linkages in chitin and chitodextrins.. Secreted chitinase involved in the degradation of chitin, a component of the cell walls of fungi and exoskeletal elements of some animals (including worms and arthropods). Plays a morphogenetic role during apical growth, cell division and differentiation (cell wall morphogenesis). May be involved in the degradation and further assimilation of phytopathogenic fungi, namely mycoparasitism, the major mechanism accounting for the antagonistic activity against phytopathogenic fungi displayed by Trichoderma. This is Endochitinase 33 (chit33) from Trichoderma harzianum (Hypocrea lixii).